Consider the following 358-residue polypeptide: Acyl-CoA desaturase 1 (358 aa).

Residues 1–71 lie on the Cytoplasmic side of the membrane; it reads MPAHMLQEIS…EGPPPKLEYV (71 aa). Positions 8–24 are enriched in low complexity; it reads EISSSYTTTTTITEPPS. Positions 8–33 are disordered; the sequence is EISSSYTTTTTITEPPSGNLQNGREK. A helical membrane pass occupies residues 72 to 92; it reads WRNIILMALLHVGALYGITLI. A substrate-binding site is contributed by Asn-74. The Lumenal portion of the chain corresponds to 93–96; sequence PSSK. The helical transmembrane segment at 97–117 threads the bilayer; that stretch reads VYTLLWGIFYYLISALGITAG. At 118–216 the chain is on the cytoplasmic side; it reads AHRLWSHRTY…EKLVMFQRRY (99 aa). 2 residues coordinate Fe cation: His-119 and His-124. The short motif at 119–124 is the Histidine box-1 element; the sequence is HRLWSH. 3 residues coordinate substrate: Asn-147, Arg-154, and Asp-155. Residues His-156, His-159, and His-160 each coordinate Fe cation. Positions 156–160 match the Histidine box-2 motif; sequence HRAHH. Arg-187 and Lys-188 together coordinate substrate. Residues 217 to 236 traverse the membrane as a helical segment; that stretch reads YKPGLLLMCFILPTLVPWYC. Residues 237-240 are Lumenal-facing; the sequence is WGET. A helical membrane pass occupies residues 241–262; the sequence is FLHSLFVSTFLRYTLVLNATWL. Trp-261 is a substrate binding site. Topologically, residues 263–358 are cytoplasmic; sequence VNSAAHLYGY…RTGDGSHKSS (96 aa). Fe cation contacts are provided by His-268, His-297, His-300, and His-301. The Histidine box-3 signature appears at 297 to 301; that stretch reads HNYHH.

Belongs to the fatty acid desaturase type 1 family. Fe(2+) serves as cofactor. In terms of tissue distribution, detected in liver (at protein level). Detected in adipose tissue. Detected in liver when rats are kept on a fat-free diet, but not when their food contains unsaturated fatty acids.

Its subcellular location is the endoplasmic reticulum membrane. It localises to the membrane. The catalysed reaction is octadecanoyl-CoA + 2 Fe(II)-[cytochrome b5] + O2 + 2 H(+) = (9Z)-octadecenoyl-CoA + 2 Fe(III)-[cytochrome b5] + 2 H2O. In terms of biological role, stearoyl-CoA desaturase that utilizes O(2) and electrons from reduced cytochrome b5 to introduce the first double bond into saturated fatty acyl-CoA substrates. Catalyzes the insertion of a cis double bond at the Delta-9 position into fatty acyl-CoA substrates including palmitoyl-CoA and stearoyl-CoA. Gives rise to a mixture of 16:1 and 18:1 unsaturated fatty acids. Plays an important role in lipid biosynthesis. Plays an important role in regulating the expression of genes that are involved in lipogenesis and in regulating mitochondrial fatty acid oxidation. Plays an important role in body energy homeostasis. Contributes to the biosynthesis of membrane phospholipids, cholesterol esters and triglycerides. Required for normal development of sebaceous glands. Required for the biosynthesis of normal levels of Delta-9 unsaturated fatty acids and 1-alkyl-2,3-diacylglycerol in the Harderian gland. Required for normal production of meibum, an oily material that prevents drying of the cornea. This chain is Acyl-CoA desaturase 1 (Scd1), found in Rattus norvegicus (Rat).